Reading from the N-terminus, the 448-residue chain is Phosphoglucosamine mutase (448 aa).

S100 (phosphoserine intermediate) is an active-site residue. 4 residues coordinate Mg(2+): S100, D240, D242, and D244. S100 carries the phosphoserine modification.

This sequence belongs to the phosphohexose mutase family. In terms of assembly, homodimer, may form a complex with CdaA. It depends on Mg(2+) as a cofactor. Post-translationally, activated by phosphorylation.

The catalysed reaction is alpha-D-glucosamine 1-phosphate = D-glucosamine 6-phosphate. Catalyzes the conversion of glucosamine-6-phosphate to glucosamine-1-phosphate. Glucosamine-1-phosphate is used for cell wall biosynthesis. The sequence is that of Phosphoglucosamine mutase from Bacillus subtilis (strain 168).